We begin with the raw amino-acid sequence, 264 residues long: 4-hydroxy-tetrahydrodipicolinate reductase (264 aa).

Residue 9–14 coordinates NAD(+); it reads GCSGRM. R36 contacts NADP(+). Residues 100–102 and 121–124 contribute to the NAD(+) site; these read GTT and SANM. The active-site Proton donor/acceptor is H154. (S)-2,3,4,5-tetrahydrodipicolinate is bound at residue H155. The active-site Proton donor is K158. (S)-2,3,4,5-tetrahydrodipicolinate is bound at residue 164–165; that stretch reads GT.

Belongs to the DapB family.

Its subcellular location is the cytoplasm. It catalyses the reaction (S)-2,3,4,5-tetrahydrodipicolinate + NAD(+) + H2O = (2S,4S)-4-hydroxy-2,3,4,5-tetrahydrodipicolinate + NADH + H(+). The enzyme catalyses (S)-2,3,4,5-tetrahydrodipicolinate + NADP(+) + H2O = (2S,4S)-4-hydroxy-2,3,4,5-tetrahydrodipicolinate + NADPH + H(+). It participates in amino-acid biosynthesis; L-lysine biosynthesis via DAP pathway; (S)-tetrahydrodipicolinate from L-aspartate: step 4/4. Its function is as follows. Catalyzes the conversion of 4-hydroxy-tetrahydrodipicolinate (HTPA) to tetrahydrodipicolinate. The protein is 4-hydroxy-tetrahydrodipicolinate reductase of Wolbachia sp. subsp. Brugia malayi (strain TRS).